A 251-amino-acid chain; its full sequence is Coproheme decarboxylase (251 aa).

Residues arginine 133, 147 to 151 (YPMSK), histidine 174, glutamine 187, and serine 225 each bind Fe-coproporphyrin III. The active site involves tyrosine 147.

Belongs to the ChdC family. Type 1 subfamily. Requires Fe-coproporphyrin III as cofactor.

It carries out the reaction Fe-coproporphyrin III + 2 H2O2 + 2 H(+) = heme b + 2 CO2 + 4 H2O. The enzyme catalyses Fe-coproporphyrin III + H2O2 + H(+) = harderoheme III + CO2 + 2 H2O. It catalyses the reaction harderoheme III + H2O2 + H(+) = heme b + CO2 + 2 H2O. Its pathway is porphyrin-containing compound metabolism; protoheme biosynthesis. Its function is as follows. Involved in coproporphyrin-dependent heme b biosynthesis. Catalyzes the decarboxylation of Fe-coproporphyrin III (coproheme) to heme b (protoheme IX), the last step of the pathway. The reaction occurs in a stepwise manner with a three-propionate intermediate. The polypeptide is Coproheme decarboxylase (Listeria innocua serovar 6a (strain ATCC BAA-680 / CLIP 11262)).